A 283-amino-acid chain; its full sequence is Elongation factor Ts (283 aa).

The tract at residues 80–83 (TDFV) is involved in Mg(2+) ion dislocation from EF-Tu.

The protein belongs to the EF-Ts family.

Its subcellular location is the cytoplasm. Functionally, associates with the EF-Tu.GDP complex and induces the exchange of GDP to GTP. It remains bound to the aminoacyl-tRNA.EF-Tu.GTP complex up to the GTP hydrolysis stage on the ribosome. This is Elongation factor Ts from Salmonella choleraesuis (strain SC-B67).